The following is a 351-amino-acid chain: Putative aryl-alcohol dehydrogenase C977.14c (351 aa).

At Ser113 the chain carries Phosphoserine.

This sequence belongs to the aldo/keto reductase family. Aldo/keto reductase 2 subfamily.

It localises to the cytoplasm. It is found in the nucleus. The sequence is that of Putative aryl-alcohol dehydrogenase C977.14c from Schizosaccharomyces pombe (strain 972 / ATCC 24843) (Fission yeast).